We begin with the raw amino-acid sequence, 393 residues long: Formate-dependent phosphoribosylglycinamide formyltransferase (393 aa).

Residues 15–16 (EL) and glutamate 75 contribute to the N(1)-(5-phospho-beta-D-ribosyl)glycinamide site. Residues arginine 107, lysine 148, 153–158 (SSGKGQ), 188–191 (EEYI), and glutamate 196 each bind ATP. The ATP-grasp domain occupies 112-302 (NLAAEKLAIK…EFELHLRAIL (191 aa)). 2 residues coordinate Mg(2+): glutamate 261 and glutamate 273. N(1)-(5-phospho-beta-D-ribosyl)glycinamide contacts are provided by residues aspartate 280, lysine 350, and 357 to 358 (RR).

This sequence belongs to the PurK/PurT family. Homodimer.

It carries out the reaction N(1)-(5-phospho-beta-D-ribosyl)glycinamide + formate + ATP = N(2)-formyl-N(1)-(5-phospho-beta-D-ribosyl)glycinamide + ADP + phosphate + H(+). The protein operates within purine metabolism; IMP biosynthesis via de novo pathway; N(2)-formyl-N(1)-(5-phospho-D-ribosyl)glycinamide from N(1)-(5-phospho-D-ribosyl)glycinamide (formate route): step 1/1. Functionally, involved in the de novo purine biosynthesis. Catalyzes the transfer of formate to 5-phospho-ribosyl-glycinamide (GAR), producing 5-phospho-ribosyl-N-formylglycinamide (FGAR). Formate is provided by PurU via hydrolysis of 10-formyl-tetrahydrofolate. This Prochlorococcus marinus (strain SARG / CCMP1375 / SS120) protein is Formate-dependent phosphoribosylglycinamide formyltransferase.